The chain runs to 233 residues: Large ribosomal subunit protein uL1 (233 aa).

Belongs to the universal ribosomal protein uL1 family. In terms of assembly, part of the 50S ribosomal subunit.

In terms of biological role, binds directly to 23S rRNA. The L1 stalk is quite mobile in the ribosome, and is involved in E site tRNA release. Protein L1 is also a translational repressor protein, it controls the translation of the L11 operon by binding to its mRNA. The polypeptide is Large ribosomal subunit protein uL1 (Rhizobium etli (strain ATCC 51251 / DSM 11541 / JCM 21823 / NBRC 15573 / CFN 42)).